The following is a 250-amino-acid chain: Beta-crystallin B1 (250 aa).

The disordered stretch occupies residues 1 to 47 (MSQVAKAAATTAVNPGPDGKGKGTPSTGTAPAPGPTPVPASVPRPAA). At Ser2 the chain carries N-acetylserine. Residues 2 to 56 (SQVAKAAATTAVNPGPDGKGKGTPSTGTAPAPGPTPVPASVPRPAAKVGELPPGS) form an N-terminal arm region. A compositionally biased stretch (pro residues) spans 32–42 (APGPTPVPASV). 2 consecutive Beta/gamma crystallin 'Greek key' domains span residues 57–96 (YRLV…IVLS) and 97–141 (GPWV…RPIR). Residues 142 to 146 (MDSQE) form a connecting peptide region. Beta/gamma crystallin 'Greek key' domains lie at 147-188 (HKIC…TVSS) and 189-231 (GTWV…RRLR). A C-terminal arm region spans residues 233–250 (RQWHQEGCFPVLTAEPPK).

The protein belongs to the beta/gamma-crystallin family. In terms of assembly, homo/heterodimer, or complexes of higher-order. The structure of beta-crystallin oligomers seems to be stabilized through interactions between the N-terminal arms. Post-translationally, specific cleavages in the N-terminal arm occur during lens maturation and give rise to truncated forms, leading to impaired oligomerization and protein insolubilization. The protease responsible for this partial degradation could be calpain II.

Its function is as follows. Crystallins are the dominant structural components of the vertebrate eye lens. The chain is Beta-crystallin B1 (Crybb1) from Rattus norvegicus (Rat).